We begin with the raw amino-acid sequence, 350 residues long: Flap endonuclease 1 (350 aa).

An N-domain region spans residues 1-101 (MGVNIREVIP…LEIERRKRVK (101 aa)). Residues D30, D83, E155, E157, D176, D178, and D239 each contribute to the Mg(2+) site. The segment at 119 to 261 (AARRYAQMAA…TALKMVKAHR (143 aa)) is I-domain. An interaction with PCNA region spans residues 340–348 (QQMGLDAWL).

The protein belongs to the XPG/RAD2 endonuclease family. FEN1 subfamily. Interacts with PCNA. PCNA stimulates the nuclease activity without altering cleavage specificity. The cofactor is Mg(2+).

Structure-specific nuclease with 5'-flap endonuclease and 5'-3' exonuclease activities involved in DNA replication and repair. During DNA replication, cleaves the 5'-overhanging flap structure that is generated by displacement synthesis when DNA polymerase encounters the 5'-end of a downstream Okazaki fragment. Binds the unpaired 3'-DNA end and kinks the DNA to facilitate 5' cleavage specificity. Cleaves one nucleotide into the double-stranded DNA from the junction in flap DNA, leaving a nick for ligation. Also involved in the base excision repair (BER) pathway. Acts as a genome stabilization factor that prevents flaps from equilibrating into structures that lead to duplications and deletions. Also possesses 5'-3' exonuclease activity on nicked or gapped double-stranded DNA. The chain is Flap endonuclease 1 from Hyperthermus butylicus (strain DSM 5456 / JCM 9403 / PLM1-5).